Consider the following 247-residue polypeptide: ATP synthase subunit a, chloroplastic (247 aa).

The next 5 helical transmembrane spans lie at 38–58, 95–115, 134–154, 199–219, and 220–240; these read QVLI…IIAV, VPFI…GALL, INTT…AGLT, LVVV…VMFL, and GLFT…AYIG.

This sequence belongs to the ATPase A chain family. F-type ATPases have 2 components, CF(1) - the catalytic core - and CF(0) - the membrane proton channel. CF(1) has five subunits: alpha(3), beta(3), gamma(1), delta(1), epsilon(1). CF(0) has four main subunits: a, b, b' and c.

The protein resides in the plastid. It localises to the chloroplast thylakoid membrane. Its function is as follows. Key component of the proton channel; it plays a direct role in the translocation of protons across the membrane. The protein is ATP synthase subunit a, chloroplastic of Carica papaya (Papaya).